Here is a 467-residue protein sequence, read N- to C-terminus: UPF0236 protein TTE0033/TTE0744/TTE0838/TTE0852/TTE1082/TTE1247/TTE1519/TTE1678/TTE1739/TTE1823/TTE2212 (467 aa).

The protein belongs to the UPF0236 family.

The protein is UPF0236 protein TTE0033/TTE0744/TTE0838/TTE0852/TTE1082/TTE1247/TTE1519/TTE1678/TTE1739/TTE1823/TTE2212 of Caldanaerobacter subterraneus subsp. tengcongensis (strain DSM 15242 / JCM 11007 / NBRC 100824 / MB4) (Thermoanaerobacter tengcongensis).